The primary structure comprises 142 residues: uncharacterized protein (142 aa).

It localises to the mitochondrion. This is an uncharacterized protein from Mus musculus (Mouse).